We begin with the raw amino-acid sequence, 263 residues long: MSLPESFALTAEDAKLLLAANVHLGSKNVQVHNEPYVYKTRPDGVNVINIAKTWEKIVLAARIIAAIPNASDVVVCSSRTFGQRAVLKFASHTGATPIAGRFTPGNFTNYITRSFKEPRLVIVTDPRTDAQAIKESSYVNIPVIALSDVDSPSEYVDVAIPCNNKGKHSIGLIWWLLAREVLRLRGIIPDREAEWSVMPDLYFYRDPEEIEQNAAEEARAGATEETEEVVAEAETEWNTETNVEDWADSGVTAAGEEAAASQW.

The residue at position 2 (serine 2) is an N-acetylserine. Low complexity predominate over residues 213 to 223 (NAAEEARAGAT). Positions 213-245 (NAAEEARAGATEETEEVVAEAETEWNTETNVED) are disordered. Acidic residues predominate over residues 224–245 (EETEEVVAEAETEWNTETNVED).

It belongs to the universal ribosomal protein uS2 family. As to quaternary structure, component of the small ribosomal subunit. Mature ribosomes consist of a small (40S) and a large (60S) subunit. The 40S subunit contains about 33 different proteins and 1 molecule of RNA (18S). The 60S subunit contains about 49 different proteins and 3 molecules of RNA (25S, 5.8S and 5S). Interacts with RPS21.

It localises to the cytoplasm. Its function is as follows. Required for the assembly and/or stability of the 40S ribosomal subunit. Required for the processing of the 20S rRNA-precursor to mature 18S rRNA in a late step of the maturation of 40S ribosomal subunits. This Clavispora lusitaniae (strain ATCC 42720) (Yeast) protein is Small ribosomal subunit protein uS2.